Reading from the N-terminus, the 210-residue chain is NAD(P)H-quinone oxidoreductase subunit I (210 aa).

4Fe-4S ferredoxin-type domains are found at residues 54-83 (GRIH…VDWA) and 94-123 (YSYS…VTED). Positions 63, 66, 69, 73, 103, 106, 109, and 113 each coordinate [4Fe-4S] cluster.

This sequence belongs to the complex I 23 kDa subunit family. NDH-1 is composed of at least 11 different subunits. [4Fe-4S] cluster is required as a cofactor.

The protein localises to the cellular thylakoid membrane. It catalyses the reaction a plastoquinone + NADH + (n+1) H(+)(in) = a plastoquinol + NAD(+) + n H(+)(out). The catalysed reaction is a plastoquinone + NADPH + (n+1) H(+)(in) = a plastoquinol + NADP(+) + n H(+)(out). In terms of biological role, NDH-1 shuttles electrons from an unknown electron donor, via FMN and iron-sulfur (Fe-S) centers, to quinones in the respiratory and/or the photosynthetic chain. The immediate electron acceptor for the enzyme in this species is believed to be plastoquinone. Couples the redox reaction to proton translocation, and thus conserves the redox energy in a proton gradient. The polypeptide is NAD(P)H-quinone oxidoreductase subunit I (Synechococcus sp. (strain JA-2-3B'a(2-13)) (Cyanobacteria bacterium Yellowstone B-Prime)).